Consider the following 367-residue polypeptide: Mannan endo-1,4-beta-mannosidase (367 aa).

An N-terminal signal peptide occupies residues 1–17 (MLLTALAVLFASTGCQA). Residues Trp-79 and Asn-176 each coordinate substrate. Glu-177 acts as the Proton donor in catalysis. Cys-192 and Cys-259 are joined by a disulfide. Positions 205, 240, and 279 each coordinate substrate. Catalysis depends on Glu-308, which acts as the Nucleophile. Trp-337 is a substrate binding site.

In terms of assembly, monomer. Post-translationally, the disulfide bond between Cys-192 and Cys-259 has not been observed in X-ray crystallography. This may be a consequence of the X-ray radiation.

The catalysed reaction is Random hydrolysis of (1-&gt;4)-beta-D-mannosidic linkages in mannans, galactomannans and glucomannans.. Its function is as follows. Hydrolyzes 1,4-beta linked polysaccharide backbones of mannans. Hydrolyzes mannohexaose (M6) preferentially to mannotriose (M4) and less preferentially to mannotetraose (M3), mannopentaose (M5), and mannobiose (M2); hydrolyzes M5 preferentially to M2, and M3, and less preferentially to mannotetraose M4; hydrolyzes M4 preferentially to M3, and less preferentially to mannose (M1), plus very little M2. Does not hydrolyze mannobiose or mannotriose. Does not hydrolyze xlyan, starch, cellulose or galactose. In Mytilus edulis (Blue mussel), this protein is Mannan endo-1,4-beta-mannosidase.